The chain runs to 402 residues: Tol-Pal system protein TolB (402 aa).

The signal sequence occupies residues 1 to 17 (MKKIVAIFLVFLGSLWA).

It belongs to the TolB family. In terms of assembly, the Tol-Pal system is composed of five core proteins: the inner membrane proteins TolA, TolQ and TolR, the periplasmic protein TolB and the outer membrane protein Pal. They form a network linking the inner and outer membranes and the peptidoglycan layer.

The protein resides in the periplasm. Functionally, part of the Tol-Pal system, which plays a role in outer membrane invagination during cell division and is important for maintaining outer membrane integrity. This chain is Tol-Pal system protein TolB, found in Campylobacter jejuni subsp. jejuni serotype O:2 (strain ATCC 700819 / NCTC 11168).